We begin with the raw amino-acid sequence, 396 residues long: Tryptophan synthase beta chain (396 aa).

Lys88 carries the N6-(pyridoxal phosphate)lysine modification.

Belongs to the TrpB family. As to quaternary structure, tetramer of two alpha and two beta chains. Pyridoxal 5'-phosphate serves as cofactor.

The enzyme catalyses (1S,2R)-1-C-(indol-3-yl)glycerol 3-phosphate + L-serine = D-glyceraldehyde 3-phosphate + L-tryptophan + H2O. Its pathway is amino-acid biosynthesis; L-tryptophan biosynthesis; L-tryptophan from chorismate: step 5/5. Its function is as follows. The beta subunit is responsible for the synthesis of L-tryptophan from indole and L-serine. The protein is Tryptophan synthase beta chain of Shewanella baltica (strain OS195).